The chain runs to 547 residues: Sodium/hydrogen exchanger 9B2 (547 aa).

The segment at 1 to 68 (MEDEDKTAEC…PQDSPTEPNG (68 aa)) is disordered. Residues 1–86 (MEDEDKTAEC…ACPPRGCLAR (86 aa)) lie on the Cytoplasmic side of the membrane. A compositionally biased stretch (basic and acidic residues) spans 23 to 45 (APPHHELQEERVMSLRGTDRSEP). Ser-49 carries the post-translational modification Phosphoserine. Residues 87–104 (VITNGTMVVLLWAMVWSV) traverse the membrane as a helical segment. Residues 105 to 113 (TGPECLPGG) lie on the Extracellular side of the membrane. Residues 114–133 (NLFGIIILFYCSITGGKLFG) form a helical membrane-spanning segment. The Cytoplasmic segment spans residues 134-144 (LIKFPTLPPLP). A helical transmembrane segment spans residues 145–161 (PLLGMLLAGFLLRNIPV). The Extracellular portion of the chain corresponds to 162–171 (INDSVRIQHK). Residues 172–189 (WSSSLRSIALSVILVRAG) traverse the membrane as a helical segment. The Cytoplasmic portion of the chain corresponds to 190-200 (LGLDSKALRKL). The helical transmembrane segment at 201-227 (KGVCVRLAMGPCIVEACASAILSHFLM) threads the bilayer. Topologically, residues 228 to 233 (GLPWQW) are extracellular. The chain crosses the membrane as a helical span at residues 234–242 (GFILGFVVG). Residues 243–270 (AVSPAVVVPSMLLLQEGGYGVGKGIPTL) lie on the Cytoplasmic side of the membrane. 4 residues coordinate Na(+): Val-244, Gly-275, Asp-278, and Asp-279. Residues 271-290 (LMAAGSFDDILAITGFNTCL) form a helical membrane-spanning segment. Topologically, residues 291–300 (GVAFSTGSTV) are extracellular. The helical transmembrane segment at 301–324 (FNIFRGILEVVIGVAAGSFLGFFI) threads the bilayer. Residues 325-339 (QYFPSRDQDNLVWKR) lie on the Cytoplasmic side of the membrane. The chain crosses the membrane as a helical span at residues 340-357 (AFLVLGFAVLAVFSSVYF). Residues 358-361 (SFPG) lie on the Extracellular side of the membrane. A helical membrane pass occupies residues 362 to 373 (SGGLCTLVMAFL). Topologically, residues 374-390 (AGMRWTDKKSEVEKVIA) are cytoplasmic. A helical transmembrane segment spans residues 391–411 (VTWDVFQPLLFGLIGAEVSIV). Residues 412–417 (SLRAET) lie on the Extracellular side of the membrane. A helical transmembrane segment spans residues 418–440 (VGLCVATLSIAVLIRILTTFLMV). Topologically, residues 441 to 461 (CFAGFNIKEKIFISFAWLPKA) are cytoplasmic. The helical transmembrane segment at 462–473 (TVQAAIGSVALD) threads the bilayer. At 474-486 (TARSHGEKQLEDY) the chain is on the extracellular side. A helical transmembrane segment spans residues 487–509 (GMDVLTVAFLAILITAPIGSLLI). At 510–547 (GLLGPRVLQKSEHRTEEEVQGETSAHIQRKPEDSITEA) the chain is on the cytoplasmic side. The segment at 522–547 (HRTEEEVQGETSAHIQRKPEDSITEA) is disordered. Positions 538–547 (RKPEDSITEA) are enriched in basic and acidic residues.

It belongs to the monovalent cation:proton antiporter 1 (CPA1) transporter (TC 2.A.36) family. As to quaternary structure, homodimer; dimerization is essential for SLC9B2 activity. Lipids seem to play a role in the stabilization of the dimerization subdomain. Widely expressed. However expression seems to be restricted to specific cell types within individual organs, e.g. osteoclasts in the bone, distal tubules of the kidney or beta-cells of Langerhans islets. In sperm specifically present in the principal piece of sperm tail (at protein level).

It localises to the cell membrane. Its subcellular location is the mitochondrion membrane. The protein resides in the endosome membrane. The protein localises to the lysosome membrane. It is found in the recycling endosome membrane. It localises to the cytoplasmic vesicle. Its subcellular location is the secretory vesicle. The protein resides in the synaptic vesicle membrane. The protein localises to the cell projection. It is found in the cilium. It localises to the flagellum membrane. Its subcellular location is the basolateral cell membrane. The protein resides in the apical cell membrane. The catalysed reaction is Na(+)(in) + H(+)(out) = Na(+)(out) + H(+)(in). The enzyme catalyses Li(+)(out) + H(+)(in) = Li(+)(in) + H(+)(out). It catalyses the reaction Li(+)(in) + Na(+)(out) = Li(+)(out) + Na(+)(in). With respect to regulation, allosterically inhibited by the N-terminal domain. Inhibited by phloretin. Its function is as follows. Electroneutral Na(+) Li(+)/H(+) antiporter that extrudes Na(+) or Li(+) in exchange for external protons across the membrane. Uses the proton gradient/membrane potential to extrude sodium. Contributes to the regulation of intracellular pH and sodium homeostasis. Also able to mediate Na(+)/Li(+) antiporter activity in kidney. May play a physiological role in renal tubular function and blood pressure homeostasis. Plays an important role for insulin secretion and clathrin-mediated endocytosis in beta-cells. Involved in sperm motility and fertility. It is controversial whether SLC9B2 plays a role in osteoclast differentiation or not. This Mus musculus (Mouse) protein is Sodium/hydrogen exchanger 9B2.